A 258-amino-acid polypeptide reads, in one-letter code: MLEAMREKPPLVHCITNYVAMNIAANVLLASGASPAMVHAPEEAGEFAGIASALTVNIGTLSTQWLDGMRAAAKAAASSGKPWVLDPVAHYATAFRRQAVADLLALKPTIIRGNASEIIALAGGESRGQGVDSRDPVEQAEDSARRLAERQQAIVAVTGAVDFVTDGNRAVRIKGGSVLMPQVTALGCALTCLVGAFAATAPEDLFGATVAALATFAVAGEDAALGAAGPGSFAWRFLDALAALDGEALDARARVSIA.

Met37 serves as a coordination point for substrate. The ATP site is built by Arg112 and Thr158. Ala185 contributes to the substrate binding site.

The protein belongs to the Thz kinase family. Mg(2+) serves as cofactor.

It catalyses the reaction 5-(2-hydroxyethyl)-4-methylthiazole + ATP = 4-methyl-5-(2-phosphooxyethyl)-thiazole + ADP + H(+). It participates in cofactor biosynthesis; thiamine diphosphate biosynthesis; 4-methyl-5-(2-phosphoethyl)-thiazole from 5-(2-hydroxyethyl)-4-methylthiazole: step 1/1. Functionally, catalyzes the phosphorylation of the hydroxyl group of 4-methyl-5-beta-hydroxyethylthiazole (THZ). In Rhizobium etli (strain CIAT 652), this protein is Hydroxyethylthiazole kinase.